We begin with the raw amino-acid sequence, 1439 residues long: Fanconi anemia group A protein homolog (1439 aa).

Residues 1-20 (MPGSPARGAAMGGGPRGLRK) are disordered. The short motif at 19–35 (RKTWTELLAGRVKKQKY) is the Nuclear localization signal element.

In terms of assembly, belongs to the multisubunit FA complex composed of FANCA, FANCB, FANCC, FANCE, FANCF, FANCG, FANCL/PHF9 and FANCM. In complex with FANCF, FANCG and FANCL, but not with FANCC, nor FANCE, interacts with HES1; this interaction may be essential for the stability and nuclear localization of FA core complex proteins. The complex with FANCC and FANCG may also include EIF2AK2 and HSP70. Interacts with FAAP20; interaction is direct. Post-translationally, phosphorylated primarily on serine residues. Phosphorylation is required for the formation of the nuclear complex. In terms of tissue distribution, mainly expressed in testis and lymphoid tissues like thymus, lymph nodes, and spleen, and at lower levels in kidney and ovary.

It localises to the nucleus. The protein localises to the cytoplasm. Functionally, DNA repair protein that may operate in a postreplication repair or a cell cycle checkpoint function. May be involved in interstrand DNA cross-link repair and in the maintenance of normal chromosome stability. In Mus musculus (Mouse), this protein is Fanconi anemia group A protein homolog (Fanca).